Here is a 422-residue protein sequence, read N- to C-terminus: Testin (422 aa).

The region spanning 92–199 (MILTNPVPAK…GDVKLPSEMD (108 aa)) is the PET domain. Disordered regions lie at residues 135–162 (QPVA…QDPS) and 194–226 (LPSE…EDKS). A compositionally biased stretch (basic and acidic residues) spans 194-212 (LPSEMDVKPGDRSSLDGGD). 3 LIM zinc-binding domains span residues 234–297 (YSCY…CDSE), 299–359 (PRCA…NHAV), and 362–422 (QGCH…MMMS).

This sequence belongs to the prickle / espinas / testin family. As to quaternary structure, interacts via LIM domain 1 with ZYX. Interacts (via LIM domain 3) with ENAH and VASP. Interacts with ALKBH4, talin, actin, alpha-actinin, GRIP1 and PXN. Interacts (via LIM domain 2) with ACTL7A (via N-terminus). Heterodimer with ACTL7A; the heterodimer interacts with ENAH to form a heterotrimer.

The protein resides in the cytoplasm. It is found in the cell junction. Its subcellular location is the focal adhesion. In terms of biological role, scaffold protein that may play a role in cell adhesion, cell spreading and in the reorganization of the actin cytoskeleton. Plays a role in the regulation of cell proliferation. May act as a tumor suppressor. This chain is Testin (TES), found in Monodelphis domestica (Gray short-tailed opossum).